The sequence spans 296 residues: Elongation factor Ts (296 aa).

An involved in Mg(2+) ion dislocation from EF-Tu region spans residues 82–85 (TDFV).

This sequence belongs to the EF-Ts family.

The protein localises to the cytoplasm. Functionally, associates with the EF-Tu.GDP complex and induces the exchange of GDP to GTP. It remains bound to the aminoacyl-tRNA.EF-Tu.GTP complex up to the GTP hydrolysis stage on the ribosome. This Coxiella burnetii (strain CbuK_Q154) (Coxiella burnetii (strain Q154)) protein is Elongation factor Ts.